The primary structure comprises 217 residues: Uridylate kinase (217 aa).

6-10 serves as a coordination point for ATP; it reads KLSGR. Position 38 (Gly38) interacts with UMP. Positions 39 and 43 each coordinate ATP. UMP-binding positions include Asp60 and 107–113; that span reads FQPGQST. The ATP site is built by Asn134, Tyr139, and Asp142.

Belongs to the UMP kinase family. In terms of assembly, homohexamer.

It localises to the cytoplasm. It catalyses the reaction UMP + ATP = UDP + ADP. Its pathway is pyrimidine metabolism; CTP biosynthesis via de novo pathway; UDP from UMP (UMPK route): step 1/1. Inhibited by UTP. Its function is as follows. Catalyzes the reversible phosphorylation of UMP to UDP. The sequence is that of Uridylate kinase from Pyrobaculum neutrophilum (strain DSM 2338 / JCM 9278 / NBRC 100436 / V24Sta) (Thermoproteus neutrophilus).